A 389-amino-acid chain; its full sequence is Sulfate adenylyltransferase (389 aa).

It belongs to the sulfate adenylyltransferase family.

It carries out the reaction sulfate + ATP + H(+) = adenosine 5'-phosphosulfate + diphosphate. It functions in the pathway sulfur metabolism; hydrogen sulfide biosynthesis; sulfite from sulfate: step 1/3. The polypeptide is Sulfate adenylyltransferase (Hyperthermus butylicus (strain DSM 5456 / JCM 9403 / PLM1-5)).